A 157-amino-acid polypeptide reads, in one-letter code: uncharacterized protein (157 aa).

A signal peptide spans M1–A26.

Its subcellular location is the secreted. This is an uncharacterized protein from Homo sapiens (Human).